A 392-amino-acid polypeptide reads, in one-letter code: Chorismate synthase (392 aa).

2 residues coordinate NADP(+): Arg-39 and Arg-45. FMN is bound by residues 131–133, 255–256, Gly-300, 315–319, and Arg-341; these read RSS, NA, and KPIPT.

The protein belongs to the chorismate synthase family. As to quaternary structure, homotetramer. FMNH2 is required as a cofactor.

The catalysed reaction is 5-O-(1-carboxyvinyl)-3-phosphoshikimate = chorismate + phosphate. The protein operates within metabolic intermediate biosynthesis; chorismate biosynthesis; chorismate from D-erythrose 4-phosphate and phosphoenolpyruvate: step 7/7. Its function is as follows. Catalyzes the anti-1,4-elimination of the C-3 phosphate and the C-6 proR hydrogen from 5-enolpyruvylshikimate-3-phosphate (EPSP) to yield chorismate, which is the branch point compound that serves as the starting substrate for the three terminal pathways of aromatic amino acid biosynthesis. This reaction introduces a second double bond into the aromatic ring system. The sequence is that of Chorismate synthase from Leuconostoc citreum (strain KM20).